Reading from the N-terminus, the 300-residue chain is 4-hydroxy-tetrahydrodipicolinate synthase (300 aa).

Thr-45 provides a ligand contact to pyruvate. The active-site Proton donor/acceptor is the Tyr-140. The active-site Schiff-base intermediate with substrate is Lys-169. Ile-210 contacts pyruvate.

The protein belongs to the DapA family. As to quaternary structure, homotetramer; dimer of dimers.

It localises to the cytoplasm. The catalysed reaction is L-aspartate 4-semialdehyde + pyruvate = (2S,4S)-4-hydroxy-2,3,4,5-tetrahydrodipicolinate + H2O + H(+). It participates in amino-acid biosynthesis; L-lysine biosynthesis via DAP pathway; (S)-tetrahydrodipicolinate from L-aspartate: step 3/4. Its function is as follows. Catalyzes the condensation of (S)-aspartate-beta-semialdehyde [(S)-ASA] and pyruvate to 4-hydroxy-tetrahydrodipicolinate (HTPA). In Helicobacter pylori (strain J99 / ATCC 700824) (Campylobacter pylori J99), this protein is 4-hydroxy-tetrahydrodipicolinate synthase.